A 489-amino-acid polypeptide reads, in one-letter code: Long chain base biosynthesis protein 2b (489 aa).

A helical transmembrane segment spans residues 2–22 (ITIPYLTAVSTYFSYGLLFAF). N6-(pyridoxal phosphate)lysine is present on K311.

This sequence belongs to the class-II pyridoxal-phosphate-dependent aminotransferase family. As to quaternary structure, heterodimer with LCB1. Component of the serine palmitoyltransferase (SPT) complex, composed of LCB1 and LCB2 (LCB2a or LCB2b). Pyridoxal 5'-phosphate serves as cofactor. Ubiquitous with the highest expression in flowers.

It localises to the endoplasmic reticulum membrane. It catalyses the reaction L-serine + hexadecanoyl-CoA + H(+) = 3-oxosphinganine + CO2 + CoA. The protein operates within lipid metabolism; sphingolipid metabolism. In terms of biological role, serine palmitoyltransferase (SPT). The heterodimer formed with LCB1 constitutes the catalytic core. Plays an important role during male gametogenesis and embryogenesis. The chain is Long chain base biosynthesis protein 2b (LCB2b) from Arabidopsis thaliana (Mouse-ear cress).